Here is a 183-residue protein sequence, read N- to C-terminus: Cell division protein ZapC (183 aa).

Belongs to the ZapC family. As to quaternary structure, interacts directly with FtsZ.

Its subcellular location is the cytoplasm. Functionally, contributes to the efficiency of the cell division process by stabilizing the polymeric form of the cell division protein FtsZ. Acts by promoting interactions between FtsZ protofilaments and suppressing the GTPase activity of FtsZ. This is Cell division protein ZapC from Proteus mirabilis (strain HI4320).